The chain runs to 113 residues: Venom protein 184 (113 aa).

Residues 1–21 form the signal peptide; it reads MKTTLIFCILGIVIPTAVVSS.

Contains 3 disulfide bonds. Expressed by the venom gland.

It localises to the secreted. The sequence is that of Venom protein 184 from Lychas mucronatus (Chinese swimming scorpion).